We begin with the raw amino-acid sequence, 349 residues long: T-cell immunoglobulin and mucin domain-containing protein 2 (349 aa).

Residues 1–20 (MVQLQVFISGLLLLLPGAVA) form the signal peptide. Residues 21–275 (SYTVVQGHSV…QKLQRNPTKG (255 aa)) lie on the Extracellular side of the membrane. In terms of domain architecture, Ig-like V-type spans 22–123 (YTVVQGHSVT…AFYFVDYLLE (102 aa)). 3 disulfide bridges follow: Cys34–Cys107, Cys48–Cys59, and Cys54–Cys106. 2 N-linked (GlcNAc...) asparagine glycosylation sites follow: Asn84 and Asn89. The segment at 128–271 (LPTSPPTRPT…AIPPQKLQRN (144 aa)) is disordered. Residues 136-215 (PTNTGRPTTT…TSTPPTPEQT (80 aa)) are compositionally biased toward low complexity. Positions 222–260 (ATTYYPDQTTAEVTEAPSHTPTDWNNTATSSDDSWNSDT) are enriched in polar residues. The chain crosses the membrane as a helical span at residues 276–296 (FYVGMSFAALLLLLLASTVAI). Residues 297–349 (TRYMVMRKNSGSLRFVAFPVSKIGASQNKVVEQARIEDEVYIIEDSPYFEEES) are Cytoplasmic-facing.

This sequence belongs to the immunoglobulin superfamily. TIM family. As to quaternary structure, homodimer.

Its subcellular location is the cell membrane. Probable receptor for SEMA4A involved in the regulation of T-cell function. The interaction with SEMA4A enhances T-cell activation. In Rattus norvegicus (Rat), this protein is T-cell immunoglobulin and mucin domain-containing protein 2 (Timd2).